The chain runs to 638 residues: 1-deoxy-D-xylulose-5-phosphate synthase (638 aa).

Residues H79 and 120–122 (GHS) each bind thiamine diphosphate. D151 lines the Mg(2+) pocket. Residues 152–153 (GA), N182, Y291, and E373 contribute to the thiamine diphosphate site. Mg(2+) is bound at residue N182.

This sequence belongs to the transketolase family. DXPS subfamily. As to quaternary structure, homodimer. It depends on Mg(2+) as a cofactor. Thiamine diphosphate serves as cofactor.

The catalysed reaction is D-glyceraldehyde 3-phosphate + pyruvate + H(+) = 1-deoxy-D-xylulose 5-phosphate + CO2. It participates in metabolic intermediate biosynthesis; 1-deoxy-D-xylulose 5-phosphate biosynthesis; 1-deoxy-D-xylulose 5-phosphate from D-glyceraldehyde 3-phosphate and pyruvate: step 1/1. Catalyzes the acyloin condensation reaction between C atoms 2 and 3 of pyruvate and glyceraldehyde 3-phosphate to yield 1-deoxy-D-xylulose-5-phosphate (DXP). In Xanthomonas campestris pv. campestris (strain 8004), this protein is 1-deoxy-D-xylulose-5-phosphate synthase.